Here is a 274-residue protein sequence, read N- to C-terminus: Putative phosphoenolpyruvate synthase regulatory protein (274 aa).

Residue 154-161 (GVSRCGKT) coordinates ADP.

This sequence belongs to the pyruvate, phosphate/water dikinase regulatory protein family. PSRP subfamily.

The catalysed reaction is [pyruvate, water dikinase] + ADP = [pyruvate, water dikinase]-phosphate + AMP + H(+). The enzyme catalyses [pyruvate, water dikinase]-phosphate + phosphate + H(+) = [pyruvate, water dikinase] + diphosphate. Its function is as follows. Bifunctional serine/threonine kinase and phosphorylase involved in the regulation of the phosphoenolpyruvate synthase (PEPS) by catalyzing its phosphorylation/dephosphorylation. The protein is Putative phosphoenolpyruvate synthase regulatory protein of Pseudomonas aeruginosa (strain LESB58).